A 428-amino-acid chain; its full sequence is Enolase (428 aa).

Position 162 (Gln-162) interacts with (2R)-2-phosphoglycerate. Glu-204 serves as the catalytic Proton donor. Mg(2+)-binding residues include Asp-241, Glu-288, and Asp-315. Positions 340, 369, 370, and 391 each coordinate (2R)-2-phosphoglycerate. Residue Lys-340 is the Proton acceptor of the active site.

This sequence belongs to the enolase family. The cofactor is Mg(2+).

It is found in the cytoplasm. Its subcellular location is the secreted. The protein localises to the cell surface. The enzyme catalyses (2R)-2-phosphoglycerate = phosphoenolpyruvate + H2O. Its pathway is carbohydrate degradation; glycolysis; pyruvate from D-glyceraldehyde 3-phosphate: step 4/5. Functionally, catalyzes the reversible conversion of 2-phosphoglycerate (2-PG) into phosphoenolpyruvate (PEP). It is essential for the degradation of carbohydrates via glycolysis. The polypeptide is Enolase (Azobacteroides pseudotrichonymphae genomovar. CFP2).